We begin with the raw amino-acid sequence, 488 residues long: Ribulose bisphosphate carboxylase large chain (488 aa).

Residues Asn-127 and Thr-177 each contribute to the substrate site. Lys-179 serves as the catalytic Proton acceptor. Lys-181 contributes to the substrate binding site. The Mg(2+) site is built by Lys-205, Asp-207, and Glu-208. Lys-205 is modified (N6-carboxylysine). The active-site Proton acceptor is His-297. Residues Arg-298, His-330, and Ser-382 each contribute to the substrate site.

This sequence belongs to the RuBisCO large chain family. Type I subfamily. As to quaternary structure, heterohexadecamer of 8 large chains and 8 small chains. Mg(2+) is required as a cofactor.

The protein localises to the plastid. The protein resides in the chloroplast. The enzyme catalyses 2 (2R)-3-phosphoglycerate + 2 H(+) = D-ribulose 1,5-bisphosphate + CO2 + H2O. The catalysed reaction is D-ribulose 1,5-bisphosphate + O2 = 2-phosphoglycolate + (2R)-3-phosphoglycerate + 2 H(+). Functionally, ruBisCO catalyzes two reactions: the carboxylation of D-ribulose 1,5-bisphosphate, the primary event in carbon dioxide fixation, as well as the oxidative fragmentation of the pentose substrate in the photorespiration process. Both reactions occur simultaneously and in competition at the same active site. This Olisthodiscus luteus (Marine phytoflagellate) protein is Ribulose bisphosphate carboxylase large chain.